Consider the following 136-residue polypeptide: MTTTTFFLFLIPVLAIILLAVNLIFSPHNPYQEKDSAFECGFHSFLGQNRTQFSISFFIFALLFLLFDLEILLVYPYVVSAYTNGIYGLVIMLVFFLVGTLGFAFELGKNALKIESRQVYNFNYKSWSGYSLIYNK.

A run of 3 helical transmembrane segments spans residues 5-25, 55-75, and 85-105; these read TFFL…NLIF, ISFF…LLVY, and GIYG…GFAF.

Belongs to the complex I subunit 3 family.

It is found in the mitochondrion membrane. The enzyme catalyses a ubiquinone + NADH + 5 H(+)(in) = a ubiquinol + NAD(+) + 4 H(+)(out). In terms of biological role, core subunit of the mitochondrial membrane respiratory chain NADH dehydrogenase (Complex I) that is believed to belong to the minimal assembly required for catalysis. Complex I functions in the transfer of electrons from NADH to the respiratory chain. The immediate electron acceptor for the enzyme is believed to be ubiquinone. This Emericella nidulans (Aspergillus nidulans) protein is NADH-ubiquinone oxidoreductase chain 3 (nd3).